The sequence spans 131 residues: MTAANQNYGTGRRKSSSARVFIKPGSGNITINQRSLEVYFGRETSRMVVRQPLELVELLDKLDLYITVKGGGISGQAGAIRHGITRALMEYDETLRPALRAAGFVTRDARRVERKKVGLHKARRRPQYSKR.

The protein belongs to the universal ribosomal protein uS9 family.

This is Small ribosomal subunit protein uS9 from Haemophilus ducreyi (strain 35000HP / ATCC 700724).